Reading from the N-terminus, the 100-residue chain is Integration host factor subunit beta (100 aa).

It belongs to the bacterial histone-like protein family. Heterodimer of an alpha and a beta chain.

In terms of biological role, this protein is one of the two subunits of integration host factor, a specific DNA-binding protein that functions in genetic recombination as well as in transcriptional and translational control. The chain is Integration host factor subunit beta from Agrobacterium fabrum (strain C58 / ATCC 33970) (Agrobacterium tumefaciens (strain C58)).